A 954-amino-acid polypeptide reads, in one-letter code: MENISNKPLSAIISEVADRYWQRINDVFPELANELTKEQGEELYRIMGLSDFIADQLCRHPQWILSLFNGELNNLSRSEFDKDLHGLLSECQSEDEANRVLRCYRNKQMVRLAWRDFLGYASLENSLLDLSALAEALIISARDWLYIQACKQYGTPMDSEGNPQPLIILGMGKLGGRELNFSSDIDLIFTFPEHGETQGGRRAIENQQFFIRMGQRLVNMLHQVTVDGFVYRVDMRLRPYGESGPLVVSFSGLEDYYQEQGRDWERYAMVKARALGPWTAFSDELHSMLRPFVYRRYIDFSAIESLRKMKQLITQEVRRRQLTDNIKLGAGGIREVEFVVQSFQLIRGGREPSLRQQSLFAAIDTLYQLGQLEYLAVDELKQSYLLLRRVENLLQGIGDQQTQTLPDSGLNWYRLCHCMGMASEAELRTHIESAMSKIHRHFIETVGGRTQDEGADLWTQQLWIAYEDDDAQTLIKEQMIDDPELWPQLKSWRETVANRSIGPRGRDTLDKLMPWLLREFTNLPTPSDALNSVSKVIDQILTRTTYLELLYENPGARQQLVSLCCASPWIAAQLAKFPMLLDELIDPTQLYDTTSLDDYGSELRQYLLRVPEEDMEQQMEALRQFKLSQQLKIAAADVTGVLPVSQVSDHLTLLSEAIIEQVVMQAWQQVTARHGVPAYLEEGVTGFAVIGYGKAGGIELGYGSDLDLVFLHSFSREKYPDQGETDGDRPIEVGHFYLKLAQRILHLFSTRTTSGELYEVDMRLRPSGASGLLVSEIEYFGEYQREEAWTWEHQALVRARFMFGSNGLSSRFSELRSEVLQLARDGSDLAKAVRDMRTKMRDHLLKVKTGHFDLKQSAGGIADIEFIAQYLVLANANQHNELSFWSDNIRIFTGLGELGILAHADVESLIQAYLFLRDESHRQTLQQKPGELPLDLVAEHANRVMDIYQRILVD.

Residues M1–T450 form an adenylyl removase region. Residues G454–D954 form an adenylyl transferase region.

Belongs to the GlnE family. Mg(2+) serves as cofactor.

The enzyme catalyses [glutamine synthetase]-O(4)-(5'-adenylyl)-L-tyrosine + phosphate = [glutamine synthetase]-L-tyrosine + ADP. It catalyses the reaction [glutamine synthetase]-L-tyrosine + ATP = [glutamine synthetase]-O(4)-(5'-adenylyl)-L-tyrosine + diphosphate. In terms of biological role, involved in the regulation of glutamine synthetase GlnA, a key enzyme in the process to assimilate ammonia. When cellular nitrogen levels are high, the C-terminal adenylyl transferase (AT) inactivates GlnA by covalent transfer of an adenylyl group from ATP to specific tyrosine residue of GlnA, thus reducing its activity. Conversely, when nitrogen levels are low, the N-terminal adenylyl removase (AR) activates GlnA by removing the adenylyl group by phosphorolysis, increasing its activity. The regulatory region of GlnE binds the signal transduction protein PII (GlnB) which indicates the nitrogen status of the cell. This is Bifunctional glutamine synthetase adenylyltransferase/adenylyl-removing enzyme from Shewanella woodyi (strain ATCC 51908 / MS32).